A 617-amino-acid chain; its full sequence is 1-deoxy-D-xylulose-5-phosphate synthase (617 aa).

Residues H77 and 118-120 each bind thiamine diphosphate; that span reads GHS. Mg(2+) is bound at residue D149. Thiamine diphosphate-binding positions include 150-151, N178, Y286, and E367; that span reads GA. Residue N178 coordinates Mg(2+).

The protein belongs to the transketolase family. DXPS subfamily. As to quaternary structure, homodimer. The cofactor is Mg(2+). Thiamine diphosphate serves as cofactor.

It catalyses the reaction D-glyceraldehyde 3-phosphate + pyruvate + H(+) = 1-deoxy-D-xylulose 5-phosphate + CO2. It participates in metabolic intermediate biosynthesis; 1-deoxy-D-xylulose 5-phosphate biosynthesis; 1-deoxy-D-xylulose 5-phosphate from D-glyceraldehyde 3-phosphate and pyruvate: step 1/1. In terms of biological role, catalyzes the acyloin condensation reaction between C atoms 2 and 3 of pyruvate and glyceraldehyde 3-phosphate to yield 1-deoxy-D-xylulose-5-phosphate (DXP). This chain is 1-deoxy-D-xylulose-5-phosphate synthase, found in Actinobacillus pleuropneumoniae serotype 5b (strain L20).